We begin with the raw amino-acid sequence, 93 residues long: Probable chloroethene reductive dehalogenase membrane anchor protein (93 aa).

Transmembrane regions (helical) follow at residues 3 to 23, 35 to 55, and 64 to 84; these read AIYFFLTIALAVGLTMLFTWF, WVLGILGLLLALFAIQHTYAS, and SAWIVGVIVLLLAVVPLLFAA.

The protein belongs to the PceB family.

The protein resides in the cell membrane. Functionally, may act as a membrane anchor for the chloroethene reductive dehalogenase VcrA. The polypeptide is Probable chloroethene reductive dehalogenase membrane anchor protein (Dehalococcoides mccartyi (strain VS)).